Consider the following 353-residue polypeptide: Photosystem II protein D1 (353 aa).

The residue at position 2 (Thr2) is an N-acetylthreonine. Thr2 is subject to Phosphothreonine. A run of 3 helical transmembrane segments spans residues 29-46 (YIGW…TATS), 118-133 (HFLL…EWEL), and 142-156 (WIAV…AATA). His118 contacts chlorophyll a. Pheophytin a is bound at residue Tyr126. Asp170 and Glu189 together coordinate [CaMn4O5] cluster. Residues 197 to 218 (FHMLGVAGVFGSSLFSAMHGSL) traverse the membrane as a helical segment. His198 is a binding site for chlorophyll a. A quinone contacts are provided by residues His215 and 264 to 265 (SF). His215 lines the Fe cation pocket. Position 272 (His272) interacts with Fe cation. Residues 274-288 (FLAAWPVVGIWFTAL) traverse the membrane as a helical segment. [CaMn4O5] cluster contacts are provided by His332, Glu333, Asp342, and Ala344. A propeptide spanning residues 345-353 (AMEAPSVNG) is cleaved from the precursor.

Belongs to the reaction center PufL/M/PsbA/D family. As to quaternary structure, PSII is composed of 1 copy each of membrane proteins PsbA, PsbB, PsbC, PsbD, PsbE, PsbF, PsbH, PsbI, PsbJ, PsbK, PsbL, PsbM, PsbT, PsbX, PsbY, PsbZ, Psb30/Ycf12, at least 3 peripheral proteins of the oxygen-evolving complex and a large number of cofactors. It forms dimeric complexes. Requires The D1/D2 heterodimer binds P680, chlorophylls that are the primary electron donor of PSII, and subsequent electron acceptors. It shares a non-heme iron and each subunit binds pheophytin, quinone, additional chlorophylls, carotenoids and lipids. D1 provides most of the ligands for the Mn4-Ca-O5 cluster of the oxygen-evolving complex (OEC). There is also a Cl(-1) ion associated with D1 and D2, which is required for oxygen evolution. The PSII complex binds additional chlorophylls, carotenoids and specific lipids. as cofactor. Post-translationally, tyr-161 forms a radical intermediate that is referred to as redox-active TyrZ, YZ or Y-Z. In terms of processing, C-terminally processed by CTPA; processing is essential to allow assembly of the oxygen-evolving complex and thus photosynthetic growth.

The protein resides in the plastid. It localises to the chloroplast thylakoid membrane. It carries out the reaction 2 a plastoquinone + 4 hnu + 2 H2O = 2 a plastoquinol + O2. Its function is as follows. Photosystem II (PSII) is a light-driven water:plastoquinone oxidoreductase that uses light energy to abstract electrons from H(2)O, generating O(2) and a proton gradient subsequently used for ATP formation. It consists of a core antenna complex that captures photons, and an electron transfer chain that converts photonic excitation into a charge separation. The D1/D2 (PsbA/PsbD) reaction center heterodimer binds P680, the primary electron donor of PSII as well as several subsequent electron acceptors. In Vigna unguiculata (Cowpea), this protein is Photosystem II protein D1.